Here is a 615-residue protein sequence, read N- to C-terminus: Filament-like plant protein 3 (615 aa).

Positions 1-18 are enriched in basic and acidic residues; sequence MDRRSWLWRRKSSEKSPG. The segment at 1 to 55 is disordered; the sequence is MDRRSWLWRRKSSEKSPGETESTGSVSSHSERFSDDQRSQSPELNSKPVTREEEA. Over residues 19–28 the composition is skewed to polar residues; the sequence is ETESTGSVSS. The span at 29 to 38 shows a compositional bias: basic and acidic residues; sequence HSERFSDDQR. A compositionally biased stretch (polar residues) spans 39-48; sequence SQSPELNSKP. 2 coiled-coil regions span residues 87–121 and 148–211; these read AEEAVSGWEKAENEAAALKQQLDASTSKVSALEDR and EEAI…KSEE. Disordered stretches follow at residues 258–289 and 319–343; these read DNSSDLKSSIDNQSDYSGRVSFSDNEMQSPSE and PHSEPGRKHSESNKELEKSNAHVNQ. The segment covering 262–288 has biased composition (polar residues); sequence DLKSSIDNQSDYSGRVSFSDNEMQSPS. Over residues 322-343 the composition is skewed to basic and acidic residues; the sequence is EPGRKHSESNKELEKSNAHVNQ. Positions 327-563 form a coiled coil; that stretch reads HSESNKELEK…KQELEHHQET (237 aa).

The protein belongs to the FPP family. As to quaternary structure, interacts with WPP/MAF proteins. Binds to COG2; this interaction promotes the association between cortical microtubules and EXO70A1. Accumulates in preferentially xylem cells.

It localises to the vesicle. Its function is as follows. Ensures, when in complex with COG2 and FPP2/VETH2, the correct secondary cell wall (SCW) deposition pattern by recruiting exocyst components to cortical microtubules in xylem cells during secondary cell wall deposition by recruiting EXO70A1. In Arabidopsis thaliana (Mouse-ear cress), this protein is Filament-like plant protein 3.